A 339-amino-acid chain; its full sequence is Holliday junction branch migration complex subunit RuvB (339 aa).

The segment at 2 to 187 (KDVNDEERII…FGIIEHMQYY (186 aa)) is large ATPase domain (RuvB-L). Residues L26, R27, G68, K71, T72, T73, 134 to 136 (EDF), R177, Y187, and R224 each bind ATP. T72 contributes to the Mg(2+) binding site. Residues 188-258 (SIDDLEKIIQ…TTKHSLHLLE (71 aa)) are small ATPAse domain (RuvB-S). A head domain (RuvB-H) region spans residues 261–339 (DEGLDQTDRK…QLGYPPKKAE (79 aa)). 2 residues coordinate DNA: R316 and R321.

It belongs to the RuvB family. As to quaternary structure, homohexamer. Forms an RuvA(8)-RuvB(12)-Holliday junction (HJ) complex. HJ DNA is sandwiched between 2 RuvA tetramers; dsDNA enters through RuvA and exits via RuvB. An RuvB hexamer assembles on each DNA strand where it exits the tetramer. Each RuvB hexamer is contacted by two RuvA subunits (via domain III) on 2 adjacent RuvB subunits; this complex drives branch migration. In the full resolvosome a probable DNA-RuvA(4)-RuvB(12)-RuvC(2) complex forms which resolves the HJ.

Its subcellular location is the cytoplasm. The enzyme catalyses ATP + H2O = ADP + phosphate + H(+). The RuvA-RuvB-RuvC complex processes Holliday junction (HJ) DNA during genetic recombination and DNA repair, while the RuvA-RuvB complex plays an important role in the rescue of blocked DNA replication forks via replication fork reversal (RFR). RuvA specifically binds to HJ cruciform DNA, conferring on it an open structure. The RuvB hexamer acts as an ATP-dependent pump, pulling dsDNA into and through the RuvAB complex. RuvB forms 2 homohexamers on either side of HJ DNA bound by 1 or 2 RuvA tetramers; 4 subunits per hexamer contact DNA at a time. Coordinated motions by a converter formed by DNA-disengaged RuvB subunits stimulates ATP hydrolysis and nucleotide exchange. Immobilization of the converter enables RuvB to convert the ATP-contained energy into a lever motion, pulling 2 nucleotides of DNA out of the RuvA tetramer per ATP hydrolyzed, thus driving DNA branch migration. The RuvB motors rotate together with the DNA substrate, which together with the progressing nucleotide cycle form the mechanistic basis for DNA recombination by continuous HJ branch migration. Branch migration allows RuvC to scan DNA until it finds its consensus sequence, where it cleaves and resolves cruciform DNA. The chain is Holliday junction branch migration complex subunit RuvB from Lactobacillus gasseri (strain ATCC 33323 / DSM 20243 / BCRC 14619 / CIP 102991 / JCM 1131 / KCTC 3163 / NCIMB 11718 / NCTC 13722 / AM63).